The chain runs to 60 residues: Transcriptional regulatory protein SenN (60 aa).

The H-T-H motif DNA-binding region spans 11-31 (RFRKRKTFGNQILPLELLIEK).

It to B.subtilis SenS.

Regulates the expression of extracellular-protein genes of Bacillus natto. This Bacillus subtilis subsp. natto protein is Transcriptional regulatory protein SenN (senN).